The primary structure comprises 322 residues: o-succinylbenzoate synthase (322 aa).

Lys-136 serves as the catalytic Proton donor. Asp-165, Glu-194, and Asp-219 together coordinate Mg(2+). Lys-243 (proton acceptor) is an active-site residue.

This sequence belongs to the mandelate racemase/muconate lactonizing enzyme family. MenC type 1 subfamily. As to quaternary structure, monomer. The cofactor is a divalent metal cation.

The catalysed reaction is (1R,6R)-6-hydroxy-2-succinyl-cyclohexa-2,4-diene-1-carboxylate = 2-succinylbenzoate + H2O. Its pathway is quinol/quinone metabolism; 1,4-dihydroxy-2-naphthoate biosynthesis; 1,4-dihydroxy-2-naphthoate from chorismate: step 4/7. It participates in cofactor biosynthesis; phylloquinone biosynthesis. Converts 2-succinyl-6-hydroxy-2,4-cyclohexadiene-1-carboxylate (SHCHC) to 2-succinylbenzoate (OSB). Does not show N-succinylamino acid racemase (NSAR) activity with N-succinyl-L-phenylglycine as substrate. This Thermosynechococcus vestitus (strain NIES-2133 / IAM M-273 / BP-1) protein is o-succinylbenzoate synthase.